Here is a 953-residue protein sequence, read N- to C-terminus: Lysosomal alpha-glucosidase (953 aa).

The N-terminal stretch at 1-27 (MNIRKPLCSNSVVGACTLVSLTTAVIL) is a signal peptide. Positions 28-69 (GHLMLRELMLLPQDLHESSSGLWKTYRPHHQESYEPAPLHIQ) are excised as a propeptide. The P-type domain occupies 80 to 131 (TQCDVTPNSRFDCAPDKGITQEQCEARGCCWVPAGQVLNGPVMGQPWCFFPP). Intrachain disulfides connect C82–C109, C92–C108, and C103–C127. 3 N-linked (GlcNAc...) asparagine glycosylation sites follow: N140, N233, and N390. Position 404 (D404) interacts with substrate. An N-linked (GlcNAc...) asparagine glycan is attached at N470. The active-site Nucleophile is D518. E521 is a catalytic residue. C533 and C558 are joined by a disulfide. Substrate contacts are provided by R600 and D616. Residues C647 and C658 are joined by a disulfide bond. N652 is a glycosylation site (N-linked (GlcNAc...) asparagine). Residue H674 participates in substrate binding. Residues N883 and N926 are each glycosylated (N-linked (GlcNAc...) asparagine).

This sequence belongs to the glycosyl hydrolase 31 family.

It localises to the lysosome. It is found in the lysosome membrane. The catalysed reaction is Hydrolysis of terminal, non-reducing (1-&gt;4)-linked alpha-D-glucose residues with release of alpha-D-glucose.. In terms of biological role, essential for the degradation of glycogen in lysosomes. Has highest activity on alpha-1,4-linked glycosidic linkages, but can also hydrolyze alpha-1,6-linked glucans. The sequence is that of Lysosomal alpha-glucosidase (Gaa) from Rattus norvegicus (Rat).